We begin with the raw amino-acid sequence, 393 residues long: Na(+)/H(+) antiporter NhaA (393 aa).

Transmembrane regions (helical) follow at residues 23–43 (AGGITLMAAAALALIVANSPF), 58–78 (LSLAHWINDALMAIFFLLVGL), 96–116 (MLPGIAAAGGVILPAIIFAVL), 126–146 (GWAVPSATDIAFALGVLSLLG), 155–175 (VFLATLAILDDLAAVVIIAIF), 178–198 (AEISMPYLGAAFITAAVLFVM), 201–221 (MGVVKLLPYLISAVILWFFVF), 224–244 (GVHATVAGVVAALMIPLKPAP), 265–285 (VAFIVVPIFGFANAGISFKGL), 298–318 (ILLGLFLGKQFGVFGAAWLAI), 334–354 (LYGVAILCGIGFTMSIFIGLL), and 367–387 (IGVLSGSALSAICGYLLLRAA).

It belongs to the NhaA Na(+)/H(+) (TC 2.A.33) antiporter family.

The protein localises to the cell inner membrane. The enzyme catalyses Na(+)(in) + 2 H(+)(out) = Na(+)(out) + 2 H(+)(in). Na(+)/H(+) antiporter that extrudes sodium in exchange for external protons. The protein is Na(+)/H(+) antiporter NhaA of Brucella canis (strain ATCC 23365 / NCTC 10854 / RM-666).